Reading from the N-terminus, the 100-residue chain is Urease subunit gamma (100 aa).

Belongs to the urease gamma subunit family. Heterotrimer of UreA (gamma), UreB (beta) and UreC (alpha) subunits. Three heterotrimers associate to form the active enzyme.

Its subcellular location is the cytoplasm. It catalyses the reaction urea + 2 H2O + H(+) = hydrogencarbonate + 2 NH4(+). The protein operates within nitrogen metabolism; urea degradation; CO(2) and NH(3) from urea (urease route): step 1/1. This is Urease subunit gamma from Blochmanniella pennsylvanica (strain BPEN).